Reading from the N-terminus, the 241-residue chain is Tumor necrosis factor receptor superfamily member grnd (241 aa).

The signal sequence occupies residues methionine 1–alanine 27. Topologically, residues alanine 28–glutamine 98 are extracellular. Intrachain disulfides connect cysteine 35–cysteine 47, cysteine 40–cysteine 54, cysteine 57–cysteine 77, and cysteine 61–cysteine 73. N-linked (GlcNAc...) asparagine glycosylation is present at asparagine 63. The helical transmembrane segment at leucine 99 to phenylalanine 119 threads the bilayer. The Cytoplasmic segment spans residues leucine 120–phenylalanine 241.

As to quaternary structure, interacts (via extracellular cysteine-rich domain) with egr (via secreted TNF-homology soluble form); forms heterohexamers when 3 copies associate with egr trimers. Interacts with Traf6/TRAF2 and veli (via PDZ domain). In terms of processing, N-glycosylated on Asn-63. Glycosylation regulates ligand binding, specifically reducing affinity for the TNF egr, thereby inhibiting activation of JNK signaling. Expressed in the adult midgut; under normal conditions expressed at lower levels than the other TNF receptor wgn.

Its subcellular location is the apical cell membrane. The protein localises to the cytoplasmic vesicle membrane. Its function is as follows. Acts as a receptor for TNF-cytokine egr. Plays a role in activation of JNK signaling and is required for egr-induced apoptosis, including in wing imaginal discs during development. May also play an egr-independent role in cell proliferation. TNF receptor involved in triggering JNK-dependent proliferation of the enteroblast-enterocyte lineage in response to stress-induced release of egr by intestinal stem cells and enteroblasts. Involved in regulation of insulin production in response to dietary protein shortage keeping systemic growth in check. Activation in brain insulin producing cells through binding of egr released into the hemolymph in response to dietary amino acid shortage, results in JNK-dependent inhibition of insulin production. This Drosophila melanogaster (Fruit fly) protein is Tumor necrosis factor receptor superfamily member grnd.